The sequence spans 606 residues: Aspartate--tRNA(Asp/Asn) ligase (606 aa).

L-aspartate is bound at residue Glu177. The tract at residues 201-204 (QLFK) is aspartate. Residue Arg223 participates in L-aspartate binding. ATP contacts are provided by residues 223-225 (RDE) and Gln232. His461 lines the L-aspartate pocket. ATP is bound at residue Glu499. Arg506 provides a ligand contact to L-aspartate. 551–554 (GMDR) lines the ATP pocket.

The protein belongs to the class-II aminoacyl-tRNA synthetase family. Type 1 subfamily. Homodimer.

Its subcellular location is the cytoplasm. The enzyme catalyses tRNA(Asx) + L-aspartate + ATP = L-aspartyl-tRNA(Asx) + AMP + diphosphate. Aspartyl-tRNA synthetase with relaxed tRNA specificity since it is able to aspartylate not only its cognate tRNA(Asp) but also tRNA(Asn). Reaction proceeds in two steps: L-aspartate is first activated by ATP to form Asp-AMP and then transferred to the acceptor end of tRNA(Asp/Asn). The protein is Aspartate--tRNA(Asp/Asn) ligase of Prochlorococcus marinus (strain MIT 9303).